A 68-amino-acid polypeptide reads, in one-letter code: Beta-defensin 1 (68 aa).

The signal sequence occupies residues 1–21 (MRTSYLLLFTLCLLLSEMASG). Positions 22–32 (DNFLTGLGHRS) are excised as a propeptide. 3 disulfide bridges follow: C37/C66, C44/C59, and C49/C67.

The protein belongs to the beta-defensin family. In terms of assembly, monomer. Homodimer.

It is found in the secreted. Its subcellular location is the membrane. Its function is as follows. Has bactericidal activity. May act as a ligand for C-C chemokine receptor CCR6. Positively regulates the sperm motility and bactericidal activity in a CCR6-dependent manner. Binds to CCR6 and triggers Ca2+ mobilization in the sperm which is important for its motility. This chain is Beta-defensin 1 (DEFB1), found in Allochrocebus preussi (Preuss's monkey).